We begin with the raw amino-acid sequence, 190 residues long: Imidazole glycerol phosphate synthase subunit HisH (190 aa).

The 189-residue stretch at isoleucine 2 to arginine 190 folds into the Glutamine amidotransferase type-1 domain. The Nucleophile role is filled by cysteine 73. Catalysis depends on residues histidine 169 and glutamate 171.

Heterodimer of HisH and HisF.

Its subcellular location is the cytoplasm. The enzyme catalyses 5-[(5-phospho-1-deoxy-D-ribulos-1-ylimino)methylamino]-1-(5-phospho-beta-D-ribosyl)imidazole-4-carboxamide + L-glutamine = D-erythro-1-(imidazol-4-yl)glycerol 3-phosphate + 5-amino-1-(5-phospho-beta-D-ribosyl)imidazole-4-carboxamide + L-glutamate + H(+). It catalyses the reaction L-glutamine + H2O = L-glutamate + NH4(+). It functions in the pathway amino-acid biosynthesis; L-histidine biosynthesis; L-histidine from 5-phospho-alpha-D-ribose 1-diphosphate: step 5/9. IGPS catalyzes the conversion of PRFAR and glutamine to IGP, AICAR and glutamate. The HisH subunit catalyzes the hydrolysis of glutamine to glutamate and ammonia as part of the synthesis of IGP and AICAR. The resulting ammonia molecule is channeled to the active site of HisF. This is Imidazole glycerol phosphate synthase subunit HisH from Pyrobaculum aerophilum (strain ATCC 51768 / DSM 7523 / JCM 9630 / CIP 104966 / NBRC 100827 / IM2).